The primary structure comprises 117 residues: uncharacterized protein (117 aa).

This sequence to H.influenzae HI_1162 and to HI_0925.

This is an uncharacterized protein from Escherichia coli (strain K12).